Consider the following 1342-residue polypeptide: DNA-directed RNA polymerase subunit beta (1342 aa).

Belongs to the RNA polymerase beta chain family. As to quaternary structure, the RNAP catalytic core consists of 2 alpha, 1 beta, 1 beta' and 1 omega subunit. When a sigma factor is associated with the core the holoenzyme is formed, which can initiate transcription.

It catalyses the reaction RNA(n) + a ribonucleoside 5'-triphosphate = RNA(n+1) + diphosphate. Functionally, DNA-dependent RNA polymerase catalyzes the transcription of DNA into RNA using the four ribonucleoside triphosphates as substrates. The chain is DNA-directed RNA polymerase subunit beta from Aliivibrio fischeri (strain ATCC 700601 / ES114) (Vibrio fischeri).